A 249-amino-acid polypeptide reads, in one-letter code: Undecaprenyl-diphosphatase (249 aa).

8 helical membrane-spanning segments follow: residues Gly-11–Phe-31, Pro-35–Val-55, Leu-80–Ser-100, Val-101–Leu-121, Ile-135–Ile-155, Phe-180–Phe-200, Thr-202–Val-222, and Val-226–Leu-246.

Belongs to the UppP family.

The protein localises to the cell membrane. The enzyme catalyses di-trans,octa-cis-undecaprenyl diphosphate + H2O = di-trans,octa-cis-undecaprenyl phosphate + phosphate + H(+). Its function is as follows. Catalyzes the dephosphorylation of undecaprenyl diphosphate (UPP). The polypeptide is Undecaprenyl-diphosphatase (Methanococcus maripaludis (strain C7 / ATCC BAA-1331)).